We begin with the raw amino-acid sequence, 37 residues long: MKIRASIRKICEKCRLIRRRRRIMVICSNPRHKQRQG.

This sequence belongs to the bacterial ribosomal protein bL36 family.

The protein localises to the plastid. Its subcellular location is the chloroplast. This Cucumis sativus (Cucumber) protein is Large ribosomal subunit protein bL36c.